A 695-amino-acid chain; its full sequence is DNA ligase (695 aa).

NAD(+)-binding positions include 36–40 (DADYD), 85–86 (SL), and glutamate 123. Residue lysine 125 is the N6-AMP-lysine intermediate of the active site. Residues arginine 146, glutamate 182, lysine 318, and lysine 342 each contribute to the NAD(+) site. 4 residues coordinate Zn(2+): cysteine 436, cysteine 439, cysteine 454, and cysteine 460. A BRCT domain is found at 617-695 (LQSGDLAGKT…EDGLKALLSQ (79 aa)).

This sequence belongs to the NAD-dependent DNA ligase family. LigA subfamily. The cofactor is Mg(2+). Requires Mn(2+) as cofactor.

It catalyses the reaction NAD(+) + (deoxyribonucleotide)n-3'-hydroxyl + 5'-phospho-(deoxyribonucleotide)m = (deoxyribonucleotide)n+m + AMP + beta-nicotinamide D-nucleotide.. Its function is as follows. DNA ligase that catalyzes the formation of phosphodiester linkages between 5'-phosphoryl and 3'-hydroxyl groups in double-stranded DNA using NAD as a coenzyme and as the energy source for the reaction. It is essential for DNA replication and repair of damaged DNA. This Bordetella avium (strain 197N) protein is DNA ligase.